The sequence spans 397 residues: 2,3-bisphosphoglycerate-independent phosphoglycerate mutase (397 aa).

It belongs to the BPG-independent phosphoglycerate mutase family. A-PGAM subfamily.

It carries out the reaction (2R)-2-phosphoglycerate = (2R)-3-phosphoglycerate. Its pathway is carbohydrate degradation; glycolysis; pyruvate from D-glyceraldehyde 3-phosphate: step 3/5. Catalyzes the interconversion of 2-phosphoglycerate and 3-phosphoglycerate. This is 2,3-bisphosphoglycerate-independent phosphoglycerate mutase from Methanosarcina acetivorans (strain ATCC 35395 / DSM 2834 / JCM 12185 / C2A).